Consider the following 406-residue polypeptide: Multidrug resistance protein MdtG (406 aa).

The next 11 helical transmembrane spans lie at 16-36 (VAWLGCFLTGAAFSLVMPFLP), 56-76 (LVFSITFLFSAIASPFWGGLA), 90-110 (LGMAIVMLLMGLAQNIWQFLL), 113-133 (ALLGLLGGFVPNANALIATQV), 144-164 (TLSTGGVSGALLGPLAGGLLA), 171-191 (PVFFITASVLLVCFLLTLFFT), 222-242 (LFVTTLIIQVATGSIAPILTL), 254-274 (IAFISGMIASVPGVAALLSAP), 288-308 (ILITALIISVLLLIPMSFVQT), 317-337 (FLLGAADGALLPAVQTLLVYN), and 376-396 (AVFCVTAGVVLFNAIYSWNSL).

This sequence belongs to the major facilitator superfamily. DHA1 family. MdtG (TC 2.A.1.2.20) subfamily.

Its subcellular location is the cell inner membrane. This chain is Multidrug resistance protein MdtG, found in Citrobacter koseri (strain ATCC BAA-895 / CDC 4225-83 / SGSC4696).